Reading from the N-terminus, the 273-residue chain is Large ribosomal subunit protein uL2cz/uL2cy (273 aa).

2 disordered regions span residues 1-23 (MAIH…SQVK) and 223-273 (NPVD…RRSK).

Belongs to the universal ribosomal protein uL2 family. Part of the 50S ribosomal subunit.

The protein resides in the plastid. It is found in the chloroplast. The chain is Large ribosomal subunit protein uL2cz/uL2cy (rpl2-A) from Oenothera argillicola (Appalachian evening primrose).